A 179-amino-acid chain; its full sequence is Large ribosomal subunit protein uL5 (179 aa).

The protein belongs to the universal ribosomal protein uL5 family. Part of the 50S ribosomal subunit; part of the 5S rRNA/L5/L18/L25 subcomplex. Contacts the 5S rRNA and the P site tRNA. Forms a bridge to the 30S subunit in the 70S ribosome.

This is one of the proteins that bind and probably mediate the attachment of the 5S RNA into the large ribosomal subunit, where it forms part of the central protuberance. In the 70S ribosome it contacts protein S13 of the 30S subunit (bridge B1b), connecting the 2 subunits; this bridge is implicated in subunit movement. Contacts the P site tRNA; the 5S rRNA and some of its associated proteins might help stabilize positioning of ribosome-bound tRNAs. This Bacillus cereus (strain 03BB102) protein is Large ribosomal subunit protein uL5.